The chain runs to 846 residues: Translation initiation factor IF-2 (846 aa).

Residues 198–219 (YKREEEEKKSKAKKAGGKGFKK) are disordered. Over residues 207–219 (SKAKKAGGKGFKK) the composition is skewed to basic residues. Residues 345–512 (SRAPVVTIMG…AVLLQSEVLE (168 aa)) form the tr-type G domain. The G1 stretch occupies residues 354 to 361 (GHVDHGKT). GTP is bound at residue 354–361 (GHVDHGKT). A G2 region spans residues 379-383 (GITQH). Residues 400-403 (DTPG) form a G3 region. Residues 400–404 (DTPGH) and 454–457 (NKID) contribute to the GTP site. The tract at residues 454–457 (NKID) is G4. Positions 490 to 492 (SAK) are G5.

This sequence belongs to the TRAFAC class translation factor GTPase superfamily. Classic translation factor GTPase family. IF-2 subfamily.

The protein resides in the cytoplasm. One of the essential components for the initiation of protein synthesis. Protects formylmethionyl-tRNA from spontaneous hydrolysis and promotes its binding to the 30S ribosomal subunits. Also involved in the hydrolysis of GTP during the formation of the 70S ribosomal complex. The sequence is that of Translation initiation factor IF-2 from Francisella tularensis subsp. holarctica (strain OSU18).